A 793-amino-acid polypeptide reads, in one-letter code: Probable phosphoketolase 2 (793 aa).

This sequence belongs to the XFP family. Thiamine diphosphate serves as cofactor.

The sequence is that of Probable phosphoketolase 2 from Nostoc sp. (strain PCC 7120 / SAG 25.82 / UTEX 2576).